An 83-amino-acid chain; its full sequence is U5-theraphotoxin-Hs1a 5 (83 aa).

An N-terminal signal peptide occupies residues 1–21 (MKTSMFLTLTGLVLLFVVCYA). Residues 22 to 49 (SESEEKEFPKELPSSIFAADSDFKVEER) constitute a propeptide that is removed on maturation. Cystine bridges form between C51-C63, C56-C68, and C62-C75.

This sequence belongs to the neurotoxin 10 (Hwtx-1) family. 51 (Hntx-8) subfamily. Hntx-8 sub-subfamily. As to expression, expressed by the venom gland.

Its subcellular location is the secreted. Functionally, agglutinates erythrocytes. In Cyriopagopus schmidti (Chinese bird spider), this protein is U5-theraphotoxin-Hs1a 5.